The primary structure comprises 275 residues: 2,3,4,5-tetrahydropyridine-2,6-dicarboxylate N-succinyltransferase (275 aa).

Substrate-binding residues include Arg-106 and Asp-143.

Belongs to the transferase hexapeptide repeat family. As to quaternary structure, homotrimer.

It is found in the cytoplasm. The catalysed reaction is (S)-2,3,4,5-tetrahydrodipicolinate + succinyl-CoA + H2O = (S)-2-succinylamino-6-oxoheptanedioate + CoA. It functions in the pathway amino-acid biosynthesis; L-lysine biosynthesis via DAP pathway; LL-2,6-diaminopimelate from (S)-tetrahydrodipicolinate (succinylase route): step 1/3. This is 2,3,4,5-tetrahydropyridine-2,6-dicarboxylate N-succinyltransferase from Burkholderia ambifaria (strain ATCC BAA-244 / DSM 16087 / CCUG 44356 / LMG 19182 / AMMD) (Burkholderia cepacia (strain AMMD)).